The following is a 207-amino-acid chain: Ribonuclease HII (207 aa).

The RNase H type-2 domain occupies 1 to 207; the sequence is MDVLGIDEAG…ATVEKMKNSQ (207 aa). Asp-7, Glu-8, and Asp-105 together coordinate a divalent metal cation.

It belongs to the RNase HII family. It depends on Mn(2+) as a cofactor. Mg(2+) serves as cofactor.

It is found in the cytoplasm. It carries out the reaction Endonucleolytic cleavage to 5'-phosphomonoester.. Endonuclease that specifically degrades the RNA of RNA-DNA hybrids. In Methanobrevibacter smithii (strain ATCC 35061 / DSM 861 / OCM 144 / PS), this protein is Ribonuclease HII.